The following is a 195-amino-acid chain: Pyridoxal 5'-phosphate synthase subunit PdxT (195 aa).

49–51 is an L-glutamine binding site; sequence GES. Cysteine 81 acts as the Nucleophile in catalysis. L-glutamine contacts are provided by residues arginine 113 and 141 to 142; that span reads IR. Active-site charge relay system residues include histidine 177 and glutamate 179.

It belongs to the glutaminase PdxT/SNO family. As to quaternary structure, in the presence of PdxS, forms a dodecamer of heterodimers. Only shows activity in the heterodimer.

It catalyses the reaction aldehydo-D-ribose 5-phosphate + D-glyceraldehyde 3-phosphate + L-glutamine = pyridoxal 5'-phosphate + L-glutamate + phosphate + 3 H2O + H(+). The enzyme catalyses L-glutamine + H2O = L-glutamate + NH4(+). Its pathway is cofactor biosynthesis; pyridoxal 5'-phosphate biosynthesis. Its function is as follows. Catalyzes the hydrolysis of glutamine to glutamate and ammonia as part of the biosynthesis of pyridoxal 5'-phosphate. The resulting ammonia molecule is channeled to the active site of PdxS. The chain is Pyridoxal 5'-phosphate synthase subunit PdxT from Mycolicibacterium vanbaalenii (strain DSM 7251 / JCM 13017 / BCRC 16820 / KCTC 9966 / NRRL B-24157 / PYR-1) (Mycobacterium vanbaalenii).